Here is a 304-residue protein sequence, read N- to C-terminus: Putative S-adenosyl-L-methionine-dependent methyltransferase MSMEG_1482/MSMEI_1446 (304 aa).

S-adenosyl-L-methionine-binding positions include aspartate 130 and 159–160; that span reads DL.

This sequence belongs to the UPF0677 family.

In terms of biological role, exhibits S-adenosyl-L-methionine-dependent methyltransferase activity. The polypeptide is Putative S-adenosyl-L-methionine-dependent methyltransferase MSMEG_1482/MSMEI_1446 (Mycolicibacterium smegmatis (strain ATCC 700084 / mc(2)155) (Mycobacterium smegmatis)).